A 302-amino-acid chain; its full sequence is 4-hydroxy-tetrahydrodipicolinate synthase (302 aa).

Residue T55 participates in pyruvate binding. Residue Y144 is the Proton donor/acceptor of the active site. K172 functions as the Schiff-base intermediate with substrate in the catalytic mechanism. A pyruvate-binding site is contributed by V214.

It belongs to the DapA family. Homotetramer; dimer of dimers.

It is found in the cytoplasm. The enzyme catalyses L-aspartate 4-semialdehyde + pyruvate = (2S,4S)-4-hydroxy-2,3,4,5-tetrahydrodipicolinate + H2O + H(+). The protein operates within amino-acid biosynthesis; L-lysine biosynthesis via DAP pathway; (S)-tetrahydrodipicolinate from L-aspartate: step 3/4. In terms of biological role, catalyzes the condensation of (S)-aspartate-beta-semialdehyde [(S)-ASA] and pyruvate to 4-hydroxy-tetrahydrodipicolinate (HTPA). The polypeptide is 4-hydroxy-tetrahydrodipicolinate synthase (Prochlorococcus marinus (strain NATL2A)).